The primary structure comprises 122 residues: Large ribosomal subunit protein bL20c (122 aa).

Belongs to the bacterial ribosomal protein bL20 family.

The protein localises to the plastid. The protein resides in the chloroplast. Its function is as follows. Binds directly to 23S ribosomal RNA and is necessary for the in vitro assembly process of the 50S ribosomal subunit. It is not involved in the protein synthesizing functions of that subunit. In Dioscorea elephantipes (Elephant's foot yam), this protein is Large ribosomal subunit protein bL20c.